The chain runs to 156 residues: Deoxyuridine 5'-triphosphate nucleotidohydrolase (156 aa).

Residues 76–78 (RSG), Asn89, 93–95 (TVD), and Lys103 contribute to the substrate site.

This sequence belongs to the dUTPase family. Requires Mg(2+) as cofactor.

The catalysed reaction is dUTP + H2O = dUMP + diphosphate + H(+). The protein operates within pyrimidine metabolism; dUMP biosynthesis; dUMP from dCTP (dUTP route): step 2/2. Its function is as follows. This enzyme is involved in nucleotide metabolism: it produces dUMP, the immediate precursor of thymidine nucleotides and it decreases the intracellular concentration of dUTP so that uracil cannot be incorporated into DNA. The chain is Deoxyuridine 5'-triphosphate nucleotidohydrolase from Rhizobium leguminosarum bv. trifolii (strain WSM2304).